Consider the following 316-residue polypeptide: ATP synthase gamma chain (316 aa).

Belongs to the ATPase gamma chain family. As to quaternary structure, F-type ATPases have 2 components, CF(1) - the catalytic core - and CF(0) - the membrane proton channel. CF(1) has five subunits: alpha(3), beta(3), gamma(1), delta(1), epsilon(1). CF(0) has three main subunits: a, b and c.

It is found in the cellular thylakoid membrane. In terms of biological role, produces ATP from ADP in the presence of a proton gradient across the membrane. The gamma chain is believed to be important in regulating ATPase activity and the flow of protons through the CF(0) complex. In Prochlorococcus marinus (strain SARG / CCMP1375 / SS120), this protein is ATP synthase gamma chain.